The sequence spans 585 residues: MAEAGTGFLEQLKSCIVWSWTYLWTVWFFIVLFLVYILRVPLKINDNLSTVSMFLNTLTPKFYVALTGTSSLISGLILIFEWWYFRKYGTSFIEQVSVSHLRPLLGGVDNNSSNNSNSSNGDSDSNRQSVSECKVWRNPLNLFRGAEYNRYTWVTGREPLTYYDMNLSAQDHQTFFTCDSDHLRPADAIMQKAWRERNPQARISAAHEALEINEIRSRVEVPLIASSTIWEIKLLPKCATAYILLAEEEATTIAEAEKLFKQALKAGDGCYRRSQQLQHHGSQYEAQHRRDTNVLVYIKRRLAMCARRLGRTREAVKMMRDLMKEFPLLSMFNIHENLLEALLELQAYADVQAVLAKYDDISLPKSATICYTAALLKARAVSDKFSPEAASRRGLSTAEMNAVEAIHRAVEFNPHVPKYLLEMKSLILPPEHILKRGDSEAIAYAFFHLAHWKRVEGALNLLHCTWEGTFRMIPYPLEKGHLFYPYPICTETADRELLPSFHEVSVYPKKELPFFILFTAGLCSFTAMLALLTHQFPELMGVFAKAMIDIFCSAEFRDWNCKSIFMRVEDELEIPPAPQSQHFQN.

Residues 15–35 traverse the membrane as a helical segment; the sequence is CIVWSWTYLWTVWFFIVLFLV. Asn47 carries an N-linked (GlcNAc...) asparagine glycan. The helical transmembrane segment at 62–82 threads the bilayer; it reads FYVALTGTSSLISGLILIFEW. Position 386 is a phosphoserine (Ser386). The chain crosses the membrane as a helical span at residues 512-532; sequence LPFFILFTAGLCSFTAMLALL.

The protein belongs to the ST7 family.

The protein resides in the membrane. The protein is Suppressor of tumorigenicity 7 protein (ST7) of Equus caballus (Horse).